Here is a 624-residue protein sequence, read N- to C-terminus: MKKNRFTYGLALGALGVVFGDIGTSPLYALKVTLSGIPINQFNILGVLSLIFWSLIIVVSFKYLMIIFRADNNGEGGILALLALMKHKSTKYQPLFYIVAIFGAGLLLGDGMLTPAISVVSAVEGLGTLSDKLYPYVLPIASLILILLFSLQATGTGRIGYLFGPLILVWFITIAILGILQIAEHPVVLKAINPYYAIAFLVDEGLQGYLLLGGIFLVVTGGEALFADIGHFGKNPIRFSWFFAALPCLLLNYFGQGANLIVRPEAISNPFFMIAPSWFYLPLIIIATVATVIASQAVITATFSLTKQAVLLGLCPKIPIVQTSMLHSGQIYVPQINFILFIGTMAFCLAFKTSDNLAHAYGIAVNLEMLLVDAMVAYAAISIWRWSIFNVMFLFGLFLLIDLAFLGANTHKFITGGWVPIVLAFFIAFIMYSWRYGLEYLRDNFYMNKEDISKILKQLQYKSLNQLPGVSAIFITDVYDKSGGSFLHFLKLSRSVPENVLIVNYIVDNIPYVHYSQRYEIVCLDEKVCKLVIHYGFMETINIPRSLEKACNKNILPFKFNVDTATFMVEIPNIMASKEKRSLSFYWQEKLFAFLMRNYSANLNIEFYKLPYNRTIAIGTYCIL.

12 helical membrane-spanning segments follow: residues 10 to 30 (LALG…LYAL), 48 to 68 (LSLI…MIIF), 94 to 114 (PLFY…GMLT), 133 to 153 (LYPY…SLQA), 159 to 179 (IGYL…ILGI), 210 to 230 (LLLG…ADIG), 242 to 262 (FFAA…NLIV), 270 to 290 (PFFM…ATVA), 331 to 351 (IYVP…CLAF), 363 to 383 (IAVN…AISI), 388 to 408 (IFNV…FLGA), and 413 to 433 (FITG…IMYS).

The protein belongs to the HAK/KUP transporter (TC 2.A.72) family.

The protein resides in the cell inner membrane. The catalysed reaction is K(+)(in) + H(+)(in) = K(+)(out) + H(+)(out). Its function is as follows. Transport of potassium into the cell. Likely operates as a K(+):H(+) symporter. This is Probable potassium transport system protein Kup 1 from Legionella pneumophila (strain Lens).